A 229-amino-acid chain; its full sequence is Urease accessory protein UreF (229 aa).

Belongs to the UreF family. As to quaternary structure, ureD, UreF and UreG form a complex that acts as a GTP-hydrolysis-dependent molecular chaperone, activating the urease apoprotein by helping to assemble the nickel containing metallocenter of UreC. The UreE protein probably delivers the nickel.

The protein resides in the cytoplasm. Its function is as follows. Required for maturation of urease via the functional incorporation of the urease nickel metallocenter. The protein is Urease accessory protein UreF of Staphylococcus saprophyticus subsp. saprophyticus (strain ATCC 15305 / DSM 20229 / NCIMB 8711 / NCTC 7292 / S-41).